The primary structure comprises 315 residues: S-methyl-5'-thioadenosine phosphorylase (315 aa).

Phosphate contacts are provided by residues Ser22, 65–66 (RH), and 98–99 (SA). Residue Met205 coordinates substrate. Residue Ser206 participates in phosphate binding. 229 to 231 (DYD) provides a ligand contact to substrate.

Belongs to the PNP/MTAP phosphorylase family. MTAP subfamily. As to quaternary structure, homotrimer.

Its subcellular location is the cytoplasm. The protein localises to the nucleus. It catalyses the reaction S-methyl-5'-thioadenosine + phosphate = 5-(methylsulfanyl)-alpha-D-ribose 1-phosphate + adenine. It functions in the pathway amino-acid biosynthesis; L-methionine biosynthesis via salvage pathway; S-methyl-5-thio-alpha-D-ribose 1-phosphate from S-methyl-5'-thioadenosine (phosphorylase route): step 1/1. In terms of biological role, catalyzes the reversible phosphorylation of S-methyl-5'-thioadenosine (MTA) to adenine and 5-methylthioribose-1-phosphate. Involved in the breakdown of MTA, a major by-product of polyamine biosynthesis. Responsible for the first step in the methionine salvage pathway after MTA has been generated from S-adenosylmethionine. Has broad substrate specificity with 6-aminopurine nucleosides as preferred substrates. The polypeptide is S-methyl-5'-thioadenosine phosphorylase (Mycosarcoma maydis (Corn smut fungus)).